The sequence spans 417 residues: Calreticulin (417 aa).

The first 17 residues, 1 to 17 (MLLPVPLLLGLLGLAAA), serve as a signal peptide directing secretion. The tract at residues 18–197 (DPTVYFKEQF…NSQVESGSLE (180 aa)) is N-domain. Gln26 provides a ligand contact to Ca(2+). Lys48 carries the N6-acetyllysine modification. Lys62 and Lys64 together coordinate Ca(2+). Lys64 carries the N6-(2-hydroxyisobutyryl)lysine modification. An alpha-D-glucoside is bound by residues Tyr109, Lys111, Tyr128, and Asp135. Cys137 and Cys163 form a disulfide bridge. Lys159 carries the N6-acetyllysine modification. Residue Asn179 is glycosylated (N-linked (GlcNAc...) asparagine). The stretch at 191-202 (VESGSLEDDWDF) is one 1-1 repeat. A 4 X approximate repeats region spans residues 191-255 (VESGSLEDDW…DAKKPEDWDE (65 aa)). A disordered region spans residues 193-270 (SGSLEDDWDF…WEPPVIQNPE (78 aa)). The tract at residues 198-308 (DDWDFLPPKK…YSPDSNIYAY (111 aa)) is P-domain. Over residues 207-251 (KIKDPDAAKPEDWDDRAKIDDPTDSKPEDWDKPEHIPDPDAKKPE) the composition is skewed to basic and acidic residues. Lys209 bears the N6-acetyllysine mark. 6 repeat units span residues 210 to 221 (DPDAAKPEDWDD), 227 to 238 (DPTDSKPEDWDK), 244 to 255 (DPDAKKPEDWDE), 259 to 269 (GEWEPPVIQNP), 273 to 283 (GEWKPRQIDNP), and 287 to 297 (GIWIHPEIDNP). The tract at residues 237-270 (DKPEHIPDPDAKKPEDWDEEMDGEWEPPVIQNPE) is interaction with PPIB. Positions 252-261 (DWDEEMDGEW) are enriched in acidic residues. A 3 X approximate repeats region spans residues 259–297 (GEWEPPVIQNPEYKGEWKPRQIDNPEYKGIWIHPEIDNP). The tract at residues 309 to 417 (ENFAVLGLDL…AAAGQAKDEL (109 aa)) is C-domain. Residue Asp317 coordinates an alpha-D-glucoside. Asp328 lines the Ca(2+) pocket. The interval 350–417 (TKAAEKQMKD…AAAGQAKDEL (68 aa)) is disordered. The segment covering 352 to 378 (AAEKQMKDKQDEEQRLHEEEEEKKGKE) has biased composition (basic and acidic residues). Over residues 379–408 (EEEADKDDDEDKDEDEEDEDEKEEEEEEDA) the composition is skewed to acidic residues. Residues 414–417 (KDEL) carry the Prevents secretion from ER motif.

The protein belongs to the calreticulin family. Monomer. Component of an EIF2 complex at least composed of CELF1/CUGBP1, CALR, CALR3, EIF2S1, EIF2S2, HSP90B1 and HSPA5. Interacts with PDIA3/ERp57 and SPACA9. Interacts with TRIM21. Interacts with NR3C1. Interacts with PPIB. Interacts (via P-domain) with PDIA5. Interacts with GABARAP. Interacts with CLCC1.

The protein localises to the endoplasmic reticulum lumen. The protein resides in the cytoplasm. Its subcellular location is the cytosol. It localises to the secreted. It is found in the extracellular space. The protein localises to the extracellular matrix. The protein resides in the cell surface. Its subcellular location is the sarcoplasmic reticulum lumen. It localises to the cytoplasmic vesicle. It is found in the secretory vesicle. The protein localises to the cortical granule. The protein resides in the cytolytic granule. Functionally, calcium-binding chaperone that promotes folding, oligomeric assembly and quality control in the endoplasmic reticulum (ER) via the calreticulin/calnexin cycle. This lectin interacts transiently with almost all of the monoglucosylated glycoproteins that are synthesized in the ER. Interacts with the DNA-binding domain of NR3C1 and mediates its nuclear export. Involved in maternal gene expression regulation. May participate in oocyte maturation via the regulation of calcium homeostasis. Present in the cortical granules of non-activated oocytes, is exocytosed during the cortical reaction in response to oocyte activation and might participate in the block to polyspermy. In Bos taurus (Bovine), this protein is Calreticulin (CALR).